Consider the following 73-residue polypeptide: UPF0235 protein SYO3AOP1_0257 (73 aa).

The protein belongs to the UPF0235 family.

This is UPF0235 protein SYO3AOP1_0257 from Sulfurihydrogenibium sp. (strain YO3AOP1).